Reading from the N-terminus, the 173-residue chain is Alpha-crystallin A chain (173 aa).

Position 1 is an N-acetylmethionine (Met-1). The segment at 1 to 63 (MDVTIQHPWF…RTVLDSGVSE (63 aa)) is required for complex formation with BFSP1 and BFSP2. Gln-6 bears the Deamidated glutamine; partial mark. Ser-45 is modified (phosphoserine). A Deamidated glutamine; partial modification is found at Gln-50. The sHSP domain occupies 52–162 (LFRTVLDSGV…GHSERAIPVS (111 aa)). Position 70 is an N6-acetyllysine (Lys-70). Gln-90 carries the deamidated glutamine; partial modification. Lys-99 carries the N6-acetyllysine modification. A Zn(2+)-binding site is contributed by His-100. Position 101 is a deamidated asparagine; partial (Asn-101). Zn(2+) is bound by residues Glu-102 and His-107. Ser-122 is modified (phosphoserine). Position 123 is a deamidated asparagine; partial (Asn-123). The interval 145–173 (KVQSGLDAGHSERAIPVSREEKPSSAPSS) is disordered. Position 147 is a deamidated glutamine; partial (Gln-147). The span at 153–167 (GHSERAIPVSREEKP) shows a compositional bias: basic and acidic residues. His-154 contacts Zn(2+). A glycan (O-linked (GlcNAc) serine) is linked at Ser-162.

It belongs to the small heat shock protein (HSP20) family. Heteromer composed of three CRYAA and one CRYAB subunits. Inter-subunit bridging via zinc ions enhances stability, which is crucial as there is no protein turn over in the lens. Can also form homodimers and homotetramers (dimers of dimers) which serve as the building blocks of homooligomers. Within homooligomers, the zinc-binding motif is created from residues of 3 different molecules. His-100 and Glu-102 from one molecule are ligands of the zinc ion, and His-107 and His-154 residues from additional molecules complete the site with tetrahedral coordination geometry. Part of a complex required for lens intermediate filament formation composed of BFSP1, BFSP2 and CRYAA. Acetylation at Lys-70 may increase chaperone activity. Post-translationally, undergoes age-dependent proteolytical cleavage at the C-terminus.

The protein localises to the cytoplasm. The protein resides in the nucleus. In terms of biological role, contributes to the transparency and refractive index of the lens. Acts as a chaperone, preventing aggregation of various proteins under a wide range of stress conditions. Required for the correct formation of lens intermediate filaments as part of a complex composed of BFSP1, BFSP2 and CRYAA. The sequence is that of Alpha-crystallin A chain (CRYAA) from Eulemur fulvus fulvus (Brown lemur).